A 317-amino-acid chain; its full sequence is Ribonuclease 3-like protein 2 (317 aa).

Residues 1-26 are disordered; it reads MAPPPAMKPASRKRGPPAPDPVELPP. The span at 16 to 26 shows a compositional bias: pro residues; it reads PPAPDPVELPP. The RNase III domain maps to 37 to 185; that stretch reads AARVERLLRY…IAAAVYVDCK (149 aa). Residues Glu-74, Asp-171, and Glu-174 each contribute to the Mg(2+) site. In terms of domain architecture, DRBM spans 211–274; that stretch reads QPVTMLHELC…ARDATRKLAG (64 aa).

Mg(2+) serves as cofactor. Requires Mn(2+) as cofactor.

Functionally, cleaves double-stranded RNA (dsRNA). The protein is Ribonuclease 3-like protein 2 of Oryza sativa subsp. japonica (Rice).